A 585-amino-acid chain; its full sequence is Lipoprotein LpqB (585 aa).

The N-terminal stretch at Met1–Gly17 is a signal peptide. Cys18 is lipidated: N-palmitoyl cysteine. Cys18 carries the S-diacylglycerol cysteine lipid modification. Disordered regions lie at residues Ser24–Met48 and Pro560–Gly585.

This sequence belongs to the LpqB lipoprotein family.

The protein resides in the cell membrane. The polypeptide is Lipoprotein LpqB (Mycolicibacterium paratuberculosis (strain ATCC BAA-968 / K-10) (Mycobacterium paratuberculosis)).